The primary structure comprises 1483 residues: Heme-responsive zinc finger transcription factor HAP1 (1483 aa).

Positions 1 to 50 (MSNTPYNSSVPSIASMTQSSVSRSPNMHTATTPGANTSSNSPPLHMSSDS) are enriched in polar residues. Residues 1–56 (MSNTPYNSSVPSIASMTQSSVSRSPNMHTATTPGANTSSNSPPLHMSSDSSKIKRK) form a disordered region. Zn(2+) is bound by residues C64, C67, C74, C81, C84, and C93. The zn(2)-C6 fungal-type DNA-binding region spans 64-93 (CTICRKRKVKCDKLRPHCQQCTKTGVAHLC). A coiled-coil region spans residues 105–134 (EKELLKDNELKKLRERVKSLEKTLSKVHSS). The tract at residues 126 to 208 (KTLSKVHSSP…ANSSSLSISN (83 aa)) is disordered. Low complexity predominate over residues 130–142 (KVHSSPSSNSLKS). Polar residues-rich tracts occupy residues 143–152 (YNTPESSNLF) and 160–176 (TLVN…SHMH). The span at 177 to 208 (QQQQQQQQQEQQQDFSRSANANANSSSLSISN) shows a compositional bias: low complexity. Positions 244-444 (KGDPYLKLLW…NTIPHHQPQS (201 aa)) are heme-responsive; required for HMC formation. HRM repeat units follow at residues 280-285 (KCPINH), 299-304 (KCPVDH), 323-328 (KCPVDH), 347-352 (RCPVDH), 389-394 (KCPVDH), and 415-420 (RCPIDH). Polar residues-rich tracts occupy residues 432–447 (STHN…SGSH) and 706–734 (QLNA…NPTL). Disordered regions lie at residues 432–458 (STHN…SRKH) and 706–767 (QLNA…KENQ). Positions 735-759 (NNNMSAATTNSSSRSGSADSRSGSN) are enriched in low complexity. One copy of the HRM 7 repeat lies at 1192–1197 (KCPVYQ). The interval 1384–1411 (TANTDTSANGSALSTLTSPQGSDLASNS) is disordered. Over residues 1388 to 1411 (DTSANGSALSTLTSPQGSDLASNS) the composition is skewed to polar residues.

In terms of assembly, binds DNA as a homodimer. Interacts with SRO9 and YDJ1. In the absence of heme, binds to at least four cellular proteins, including YDJ1 and SRO9, forming a high-molecular-weight complex (HMC) which results in repression of its activity and dictates its DNA-binding specificity.

It localises to the nucleus. In terms of biological role, regulation of oxygen dependent gene expression. It modulates the expression of Iso-1 (CYP1) and Iso-2 (CYP3) cytochrome c. In response to heme, promotes transcription of genes encoding functions required for respiration, controlling oxidative damage and repression of anaerobic genes. Binds to the sequence 5'-CGGNNNTNNCGG-3'. Is non-functional in terms of iso-1 cytochrome c expression in strain S288c and its derivatives. The protein is Heme-responsive zinc finger transcription factor HAP1 (HAP1) of Saccharomyces cerevisiae (Baker's yeast).